The primary structure comprises 559 residues: Poly(3-hydroxyalkanoate) polymerase 1 (559 aa).

Residue Cys296 is part of the active site.

This sequence belongs to the PHA/PHB synthase family. Type II PhaC subfamily.

Its pathway is biopolymer metabolism; poly-(R)-3-hydroxybutanoate biosynthesis. Synthesizes poly(3-hydroxyalkanoates) (PHA), complements a mutant of P.putida that does not make PHA. This chain is Poly(3-hydroxyalkanoate) polymerase 1, found in Ectopseudomonas oleovorans (Pseudomonas oleovorans).